Reading from the N-terminus, the 352-residue chain is Protein-glutamate methylesterase/protein-glutamine glutaminase 2 (352 aa).

Residues 1 to 116 (MVVDDSAVVR…KQFLTDSADE (116 aa)) form the Response regulatory domain. Asp-50 carries the post-translational modification 4-aspartylphosphate. The region spanning 162–352 (AQTTERIVAI…MAREIVTQLQ (191 aa)) is the CheB-type methylesterase domain. Residues Ser-174, His-200, and Asp-296 contribute to the active site.

The protein belongs to the CheB family. Post-translationally, phosphorylated by CheA. Phosphorylation of the N-terminal regulatory domain activates the methylesterase activity.

It is found in the cytoplasm. It catalyses the reaction [protein]-L-glutamate 5-O-methyl ester + H2O = L-glutamyl-[protein] + methanol + H(+). The catalysed reaction is L-glutaminyl-[protein] + H2O = L-glutamyl-[protein] + NH4(+). Its function is as follows. Involved in chemotaxis. Part of a chemotaxis signal transduction system that modulates chemotaxis in response to various stimuli. Catalyzes the demethylation of specific methylglutamate residues introduced into the chemoreceptors (methyl-accepting chemotaxis proteins or MCP) by CheR. Also mediates the irreversible deamidation of specific glutamine residues to glutamic acid. In Xanthomonas campestris pv. campestris (strain ATCC 33913 / DSM 3586 / NCPPB 528 / LMG 568 / P 25), this protein is Protein-glutamate methylesterase/protein-glutamine glutaminase 2.